The following is a 92-amino-acid chain: YcgL domain-containing protein SO_2575 (92 aa).

The YcgL domain occupies 1-85 (MLCAVYKSSR…PQVNLLAEHR (85 aa)).

The protein is YcgL domain-containing protein SO_2575 of Shewanella oneidensis (strain ATCC 700550 / JCM 31522 / CIP 106686 / LMG 19005 / NCIMB 14063 / MR-1).